Consider the following 2240-residue polypeptide: Death-inducer obliterator 1 (2240 aa).

At Met1 the chain carries N-acetylmethionine. Residues 1 to 25 (MDDKGDPSNEEAPKAIKPTSKEFRK) show a composition bias toward basic and acidic residues. Positions 1 to 259 (MDDKGDPSNE…EPGDLGRPKP (259 aa)) are disordered. Phosphoserine occurs at positions 60 and 114. Polar residues predominate over residues 111 to 130 (SEGSVESASETRSGPQSAST). Over residues 132-146 (VKERPASSEKVKGGD) the composition is skewed to basic and acidic residues. Residues 147 to 156 (DHDDTSDSDS) are compositionally biased toward acidic residues. Thr151 carries the phosphothreonine modification. Ser152 and Ser154 each carry phosphoserine. 2 consecutive short sequence motifs (nuclear localization signal) follow at residues 165 to 173 (QNRLRRKRE) and 185 to 193 (QSRLRKKRR). Residues 172-181 (REQEPTERPL) are compositionally biased toward basic and acidic residues. A compositionally biased stretch (basic and acidic residues) spans 230 to 246 (GKDDRESKLEGKAAQDI). Residue Lys247 forms a Glycyl lysine isopeptide (Lys-Gly) (interchain with G-Cter in SUMO2) linkage. The PHD-type zinc finger occupies 268-322 (ALYCICRQPHNNRFMICCDRCEEWFHGDCVGISEARGRLLERNGEDYICPNCTIL). Disordered regions lie at residues 431-456 (SGKE…PKCG), 501-567 (STPS…RNLV), 584-618 (KKPP…GPAP), 773-826 (RPAR…EKST), 860-947 (VPSA…EDLS), 1013-1045 (LAKP…PEGD), 1206-1427 (GELD…VAYD), 1453-1472 (RRNS…TPSL), and 1517-2240 (SDAL…ASQA). Residues 433–451 (KEQKPKPKEKMKMKPEKPS) are compositionally biased toward basic and acidic residues. Residues 501–510 (STPSWASDHN) are compositionally biased toward polar residues. The residue at position 523 (Ser523) is a Phosphoserine. A compositionally biased stretch (basic and acidic residues) spans 530–541 (STKEDRRSEEKA). 2 stretches are compositionally biased toward low complexity: residues 542–551 (AAMAASKKTA) and 604–618 (PSSG…GPAP). The region spanning 670 to 790 (IRQNIRRSLK…SRTKLHNESK (121 aa)) is the TFIIS central domain. Residues 773–791 (RPARSVMESRTKLHNESKK) are compositionally biased toward basic and acidic residues. The span at 800–815 (PDLEDSPPVSDSEEQQ) shows a compositional bias: acidic residues. A phosphoserine mark is found at Ser805 and Ser809. Over residues 878–890 (VKKEDLKSKHDSS) the composition is skewed to basic and acidic residues. Lys879 is covalently cross-linked (Glycyl lysine isopeptide (Lys-Gly) (interchain with G-Cter in SUMO2)). Phosphoserine occurs at positions 889 and 898. The segment covering 930 to 941 (PGPPGDGHPEPS) has biased composition (pro residues). 3 positions are modified to phosphoserine: Ser1019, Ser1030, and Ser1040. Positions 1207–1220 (ELDKMDEKRTRLQP) are enriched in basic and acidic residues. The residue at position 1244 (Tyr1244) is a Phosphotyrosine. Residue Thr1256 is modified to Phosphothreonine. The segment covering 1258–1271 (PGSPPPPPPLPEPP) has biased composition (pro residues). Phosphoserine is present on residues Ser1260 and Ser1312. Residues 1276–1313 (LSSLKPAAPSPATAATTAAAASTAASSTASSASKTASP) show a composition bias toward low complexity. The segment covering 1376–1392 (LEEEEDDRPYDPEEEYD) has biased composition (acidic residues). Positions 1393 to 1424 (PERAFDTQLVERGRRHEVERAPEAAAAEREEV) are enriched in basic and acidic residues. Ser1456 is modified (phosphoserine). The residue at position 1469 (Thr1469) is a Phosphothreonine. Residues Ser1522 and Ser1714 each carry the phosphoserine modification. The segment covering 1771-1782 (FPGPRGPAPPFP) has biased composition (pro residues). Arg1835 carries the omega-N-methylarginine modification. Over residues 1842–1856 (FEERKDPHGEKREFQ) the composition is skewed to basic and acidic residues. Asymmetric dimethylarginine occurs at positions 1893, 1894, 1977, 1982, 1993, 2008, and 2024. Over residues 2044-2059 (AGPPSALSSSAPGQGP) the composition is skewed to low complexity. Composition is skewed to basic and acidic residues over residues 2069-2101 (DFRE…KPLE) and 2109-2230 (ASED…EASR).

Interacts specifically (via PHD-type zinc finger) with histone H3 that is trimethylated at 'Lys-4' (H3K4me3), histone phosphorylation at 'Thr-3' or 'Thr-6' disrupts this binding and promotes translocation of DIDO1 from chromatin to the mitotic spindle during mitosis. In terms of tissue distribution, ubiquitous.

The protein resides in the cytoplasm. The protein localises to the nucleus. It is found in the cytoskeleton. It localises to the spindle. Putative transcription factor, weakly pro-apoptotic when overexpressed. Tumor suppressor. Required for early embryonic stem cell development. In terms of biological role, displaces isoform 4 at the onset of differentiation, required for repression of stemness genes. In Homo sapiens (Human), this protein is Death-inducer obliterator 1 (DIDO1).